Here is a 296-residue protein sequence, read N- to C-terminus: GTPase Era (296 aa).

Residues 3 to 170 enclose the Era-type G domain; sequence KSGFITIVGR…LELMVKYLPE (168 aa). The segment at 11–18 is G1; sequence GRPNVGKS. Position 11–18 (11–18) interacts with GTP; the sequence is GRPNVGKS. Positions 37–41 are G2; sequence QTTRN. Residues 58–61 form a G3 region; that stretch reads DTPG. GTP contacts are provided by residues 58–62 and 120–123; these read DTPGI and NKVD. Residues 120–123 are G4; the sequence is NKVD. Residues 149–151 form a G5 region; the sequence is ISA. In terms of domain architecture, KH type-2 spans 201-278; the sequence is LSQEVPHGIA…NIKIWVKVRK (78 aa).

This sequence belongs to the TRAFAC class TrmE-Era-EngA-EngB-Septin-like GTPase superfamily. Era GTPase family. In terms of assembly, monomer.

The protein localises to the cytoplasm. It is found in the cell membrane. An essential GTPase that binds both GDP and GTP, with rapid nucleotide exchange. Plays a role in 16S rRNA processing and 30S ribosomal subunit biogenesis and possibly also in cell cycle regulation and energy metabolism. The protein is GTPase Era of Clostridium perfringens (strain ATCC 13124 / DSM 756 / JCM 1290 / NCIMB 6125 / NCTC 8237 / Type A).